The primary structure comprises 1516 residues: Neurite extension and migration factor (1516 aa).

Residues 380 to 405 (LDKKKGKEEGQEDKGVEKKDGKDNGE) are compositionally biased toward basic and acidic residues. 5 disordered regions span residues 380–440 (LDKK…GSFS), 589–610 (QKKK…SQKQ), 1158–1225 (TFND…STKK), 1373–1419 (TPQE…PGYN), and 1437–1479 (LGNN…ESGT). 3 stretches are compositionally biased toward polar residues: residues 596 to 610 (NTNT…SQKQ), 1158 to 1170 (TFND…STNN), and 1185 to 1194 (GAMNQSSSQK). Basic residues predominate over residues 1443 to 1453 (THKKLYRHKSS). Basic and acidic residues predominate over residues 1456-1479 (ALRDEKCKGKHMEREQVHKDESGT).

As to expression, highly expressed in fetal and adult brain, predominantly in the cerebral cortex and the cerebellum. Also expressed in other tissues but to a lesser extent.

It localises to the nucleus. The protein resides in the cytoplasm. Functionally, involved in neurite outgrowth by regulating cell-cell adhesion via the N-cadherin signaling pathway. May act by regulating expression of protein-coding genes, such as N-cadherins and integrin beta-1 (ITGB1). This is Neurite extension and migration factor from Homo sapiens (Human).